A 79-amino-acid chain; its full sequence is Putative transmembrane protein ORF17 (79 aa).

2 helical membrane passes run 8 to 28 (LMIY…IMYY) and 50 to 70 (VFVM…TTTI).

The protein localises to the host membrane. This is Putative transmembrane protein ORF17 from Haloarcula hispanica (His1V).